The primary structure comprises 105 residues: Large ribosomal subunit protein uL24 (105 aa).

It belongs to the universal ribosomal protein uL24 family. As to quaternary structure, part of the 50S ribosomal subunit.

In terms of biological role, one of two assembly initiator proteins, it binds directly to the 5'-end of the 23S rRNA, where it nucleates assembly of the 50S subunit. Its function is as follows. One of the proteins that surrounds the polypeptide exit tunnel on the outside of the subunit. The chain is Large ribosomal subunit protein uL24 from Xanthomonas oryzae pv. oryzae (strain PXO99A).